The sequence spans 142 residues: Large ribosomal subunit protein uL13 (142 aa).

This sequence belongs to the universal ribosomal protein uL13 family. Part of the 50S ribosomal subunit.

Its function is as follows. This protein is one of the early assembly proteins of the 50S ribosomal subunit, although it is not seen to bind rRNA by itself. It is important during the early stages of 50S assembly. The chain is Large ribosomal subunit protein uL13 from Thermococcus kodakarensis (strain ATCC BAA-918 / JCM 12380 / KOD1) (Pyrococcus kodakaraensis (strain KOD1)).